Here is a 58-residue protein sequence, read N- to C-terminus: Basic phospholipase A2 homolog PocTX (58 aa).

Cysteine 29 and cysteine 45 are disulfide-bonded.

Expressed by the venom gland.

The protein resides in the secreted. Functionally, wasp venom phospholipase A2 homolog that lacks enzymatic activity. The chain is Basic phospholipase A2 homolog PocTX from Polybia occidentalis (Paper wasp).